The following is a 70-amino-acid chain: ATP synthase subunit c (70 aa).

The next 2 membrane-spanning stretches (helical) occupy residues alanine 3–alanine 23 and leucine 44–phenylalanine 64.

The protein belongs to the ATPase C chain family. In terms of assembly, F-type ATPases have 2 components, F(1) - the catalytic core - and F(0) - the membrane proton channel. F(1) has five subunits: alpha(3), beta(3), gamma(1), delta(1), epsilon(1). F(0) has three main subunits: a(1), b(2) and c(10-14). The alpha and beta chains form an alternating ring which encloses part of the gamma chain. F(1) is attached to F(0) by a central stalk formed by the gamma and epsilon chains, while a peripheral stalk is formed by the delta and b chains.

The protein localises to the cell membrane. Its function is as follows. F(1)F(0) ATP synthase produces ATP from ADP in the presence of a proton or sodium gradient. F-type ATPases consist of two structural domains, F(1) containing the extramembraneous catalytic core and F(0) containing the membrane proton channel, linked together by a central stalk and a peripheral stalk. During catalysis, ATP synthesis in the catalytic domain of F(1) is coupled via a rotary mechanism of the central stalk subunits to proton translocation. Functionally, key component of the F(0) channel; it plays a direct role in translocation across the membrane. A homomeric c-ring of between 10-14 subunits forms the central stalk rotor element with the F(1) delta and epsilon subunits. This is ATP synthase subunit c from Caldicellulosiruptor bescii (strain ATCC BAA-1888 / DSM 6725 / KCTC 15123 / Z-1320) (Anaerocellum thermophilum).